The primary structure comprises 262 residues: Ninja-family protein 3 (262 aa).

The interval 48–69 is disordered; the sequence is RRNSLTCNTSKEAAGQSPEEMN.

It belongs to the Ninja family.

The protein resides in the nucleus. In Zea mays (Maize), this protein is Ninja-family protein 3.